The sequence spans 158 residues: Ribosomal RNA large subunit methyltransferase H (158 aa).

S-adenosyl-L-methionine-binding positions include L74, G105, and 124–129; that span reads LGPLTL.

Belongs to the RNA methyltransferase RlmH family. In terms of assembly, homodimer.

The protein localises to the cytoplasm. The enzyme catalyses pseudouridine(1915) in 23S rRNA + S-adenosyl-L-methionine = N(3)-methylpseudouridine(1915) in 23S rRNA + S-adenosyl-L-homocysteine + H(+). Specifically methylates the pseudouridine at position 1915 (m3Psi1915) in 23S rRNA. The sequence is that of Ribosomal RNA large subunit methyltransferase H from Xylella fastidiosa (strain 9a5c).